A 323-amino-acid polypeptide reads, in one-letter code: Nucleotide-binding protein ZMO1325 (323 aa).

Position 25–32 (25–32 (GLSGAGKS)) interacts with ATP. 78 to 81 (DSRT) contacts GTP.

It belongs to the RapZ-like family.

Functionally, displays ATPase and GTPase activities. The polypeptide is Nucleotide-binding protein ZMO1325 (Zymomonas mobilis subsp. mobilis (strain ATCC 31821 / ZM4 / CP4)).